Reading from the N-terminus, the 2729-residue chain is 3-methylorcinaldehyde synthase (2729 aa).

The N-terminal acylcarrier protein transacylase domain (SAT) stretch occupies residues 99–238 (LPAALLIPLA…GTISNLTRQL (140 aa)). A compositionally biased stretch (polar residues) spans 361–373 (SLASTVDINSGNG). The tract at residues 361 to 391 (SLASTVDINSGNGKTRRVKPADAQSSANSTH) is disordered. The region spanning 397–828 (DTDIAIVGMS…GSNASAVLVQ (432 aa)) is the Ketosynthase family 3 (KS3) domain. Residues Cys-571, His-706, and His-748 each act as for beta-ketoacyl synthase activity in the active site. A malonyl-CoA:ACP transacylase (MAT) domain region spans residues 942-1230 (FGGQVSCFVG…FLEAGTNSSV (289 aa)). Ser-1029 (for acyl/malonyl transferase activity) is an active-site residue. The segment at 1345-1479 (ETILTFHSSD…GTVAFKNPGD (135 aa)) is N-terminal hotdog fold. One can recognise a PKS/mFAS DH domain in the interval 1345 to 1669 (ETILTFHSSD…YVKIARPSME (325 aa)). The interval 1374 to 1665 (KQLLRGHMTL…LGIAYVKIAR (292 aa)) is product template (PT) domain. His-1380 acts as the Proton acceptor; for dehydratase activity in catalysis. The tract at residues 1513–1669 (DEMLGNQSIY…YVKIARPSME (157 aa)) is C-terminal hotdog fold. Asp-1575 serves as the catalytic Proton donor; for dehydratase activity. Residues 1682–1701 (AGGKTTPQTATKPAAAPVVA) are compositionally biased toward low complexity. Positions 1682–1726 (AGGKTTPQTATKPAAAPVVADHTPRTTESASTVNGVNLDDRKPEG) are disordered. The span at 1707–1716 (TTESASTVNG) shows a compositional bias: polar residues. Residues 1750–1824 (QDMIARVKAV…GLLQCVAGAL (75 aa)) form the Carrier domain. O-(pantetheine 4'-phosphoryl)serine is present on Ser-1784. The segment covering 1835 to 1868 (TLTASSDSGINSAKSSILSGTSTSTSTGTTDTGS) has biased composition (low complexity). The segment at 1835-1874 (TLTASSDSGINSAKSSILSGTSTSTSTGTTDTGSDVGQSM) is disordered. Residues 2086–2254 (EINPLRIMET…GYVDWTEGMT (169 aa)) are methyltransferase (C-MeT) domain. Residues 2344–2599 (ITGGTGGLGA…GWTPADYVAR (256 aa)) are reductase (R) domain.

It functions in the pathway secondary metabolite biosynthesis; terpenoid biosynthesis. Functionally, non-reducing polyketide synthase; part of the gene cluster that mediates the biosynthesis of xenovulene A, an unusual meroterpenoid that has potent inhibitory effects on the human gamma-aminobutyrate A (GABAA) benzodiazepine receptor. The first step of xenovulene A biosynthesis is the biosynthesis of 3-methylorcinaldehyde performed by the non-reducing polyketide synthase aspks1. The salicylate hydroxylase asL1 then catalyzes the oxidative dearomatization of 3-methylorcinaldehyde to yield a dearomatized hydroxycyclohexadione. The 2-oxoglutarate-dependent dioxygenase asL3 further catalyzes the oxidative ring expansion to provide the first tropolone metabolite. The cytochrome P450 monooxygenase asR2 allows the synthesis of tropolone hemiacetal. In parallel, a previously unrecognised class of terpene cyclase, asR6, produces alpha-humulene from farnesylpyrophosphate (FPP). The putative Diels-Alderase asR5 probably catalyzes the formation of the tropolone-humulene skeleton by linking humulene and the polyketide moiety. Oxidative-ring contractions catalyzed by asL4 and asL6 then processively remove carbon atoms from the polyketide to yield xenovulene A. The protein is 3-methylorcinaldehyde synthase of Sarocladium schorii (Acremonium strictum (strain IMI 501407)).